Reading from the N-terminus, the 225-residue chain is Holliday junction branch migration complex subunit RuvA (225 aa).

Positions 1–71 are domain I; it reads MISWINGELV…EDSDLLFGFT (71 aa). Residues 72 to 150 form a domain II region; sequence SKDQKFFFIE…SKIQIEEEKG (79 aa). Residues 151–161 form a flexible linker region; it reads QEEFEITNPEI. Residues 161-225 form a domain III region; it reads IYKLMEDLQL…LDQGNSNLAR (65 aa).

It belongs to the RuvA family. Homotetramer. Forms an RuvA(8)-RuvB(12)-Holliday junction (HJ) complex. HJ DNA is sandwiched between 2 RuvA tetramers; dsDNA enters through RuvA and exits via RuvB. An RuvB hexamer assembles on each DNA strand where it exits the tetramer. Each RuvB hexamer is contacted by two RuvA subunits (via domain III) on 2 adjacent RuvB subunits; this complex drives branch migration. In the full resolvosome a probable DNA-RuvA(4)-RuvB(12)-RuvC(2) complex forms which resolves the HJ.

The protein resides in the cytoplasm. In terms of biological role, the RuvA-RuvB-RuvC complex processes Holliday junction (HJ) DNA during genetic recombination and DNA repair, while the RuvA-RuvB complex plays an important role in the rescue of blocked DNA replication forks via replication fork reversal (RFR). RuvA specifically binds to HJ cruciform DNA, conferring on it an open structure. The RuvB hexamer acts as an ATP-dependent pump, pulling dsDNA into and through the RuvAB complex. HJ branch migration allows RuvC to scan DNA until it finds its consensus sequence, where it cleaves and resolves the cruciform DNA. The protein is Holliday junction branch migration complex subunit RuvA of Prochlorococcus marinus (strain MIT 9215).